The sequence spans 388 residues: Reducing end xylose-releasing exo-oligoxylanase (388 aa).

Glutamate 70 acts as the Proton donor in catalysis. Residue aspartate 263 is the Proton acceptor of the active site.

The protein belongs to the glycosyl hydrolase 8 (cellulase D) family.

The catalysed reaction is Hydrolysis of (1-&gt;4)-beta-D-xylose residues from the reducing end of oligosaccharides.. Its function is as follows. Hydrolyzes xylooligosaccharides with a degree of polymerization of greater than or equal to 3, releasing xylose from the reducing end. Only hydrolyzes the beta anomers of xylooligosaccharides, with inversion of anomeric configuration. Hydrolyzes the glucose and xylose-based trisaccharides where xylose is located at the -1 subsite, GXX, XXG and GXG. Does not hydrolyze xylan, chitosan, lichenan, curdlan or carboxymethylcellulose. In Halalkalibacterium halodurans (strain ATCC BAA-125 / DSM 18197 / FERM 7344 / JCM 9153 / C-125) (Bacillus halodurans), this protein is Reducing end xylose-releasing exo-oligoxylanase.